The chain runs to 191 residues: dCTP deaminase (191 aa).

DCTP is bound by residues 112–117, 136–138, Gln-157, Tyr-173, and Gln-183; these read KSTYAR and TLE. The Proton donor/acceptor role is filled by Glu-138.

It belongs to the dCTP deaminase family. As to quaternary structure, homotrimer.

It catalyses the reaction dCTP + H2O + H(+) = dUTP + NH4(+). Its pathway is pyrimidine metabolism; dUMP biosynthesis; dUMP from dCTP (dUTP route): step 1/2. Catalyzes the deamination of dCTP to dUTP. The protein is dCTP deaminase of Xylella fastidiosa (strain M12).